Reading from the N-terminus, the 207-residue chain is Macrophage immunometabolism regulator (207 aa).

Met-1 is modified (N-acetylmethionine). Residues 1 to 41 (MEVDINGDSRSTLTTLPLPVAEGSSPGKAEAEKPRCSSTPC) are disordered. Phosphoserine is present on residues Ser-25 and Ser-167.

The protein belongs to the UNC119-binding protein family. In terms of assembly, interacts with UNC119 and UNC119B; interaction preferentially takes place when UNC119 and UNC119B are unliganded with myristoylated proteins. As to expression, highly expressed in photoreceptors.

The protein localises to the cytoplasm. It is found in the cell projection. The protein resides in the cilium. Its function is as follows. Regulates the macrophage function, by enhancing the resolution of inflammation and wound repair functions mediated by M2 macrophages. The regulation of macrophage function is, due at least in part, to its ability to inhibit glycolysis. May also play a role in trafficking of proteins via its interaction with UNC119 and UNC119B cargo adapters: may help the release of UNC119 and UNC119B cargo or the recycling of UNC119 and UNC119B. May play a role in ciliary membrane localization via its interaction with UNC119B and protein transport into photoreceptor cells. The sequence is that of Macrophage immunometabolism regulator from Mus musculus (Mouse).